Reading from the N-terminus, the 121-residue chain is Large ribosomal subunit protein bL12 (121 aa).

Belongs to the bacterial ribosomal protein bL12 family. As to quaternary structure, homodimer. Part of the ribosomal stalk of the 50S ribosomal subunit. Forms a multimeric L10(L12)X complex, where L10 forms an elongated spine to which 2 to 4 L12 dimers bind in a sequential fashion. Binds GTP-bound translation factors.

Its function is as follows. Forms part of the ribosomal stalk which helps the ribosome interact with GTP-bound translation factors. Is thus essential for accurate translation. The protein is Large ribosomal subunit protein bL12 of Clostridioides difficile (strain 630) (Peptoclostridium difficile).